We begin with the raw amino-acid sequence, 288 residues long: Formamidopyrimidine-DNA glycosylase (288 aa).

The active-site Schiff-base intermediate with DNA is proline 2. Glutamate 3 acts as the Proton donor in catalysis. The active-site Proton donor; for beta-elimination activity is the lysine 58. Histidine 99, arginine 118, and lysine 161 together coordinate DNA. The segment at 252–288 adopts an FPG-type zinc-finger fold; sequence RVYDREAEPCPREGCGGTIKRIVQAGRSTFFCAKCQR. Residue arginine 278 is the Proton donor; for delta-elimination activity of the active site.

It belongs to the FPG family. In terms of assembly, monomer. The cofactor is Zn(2+).

It carries out the reaction Hydrolysis of DNA containing ring-opened 7-methylguanine residues, releasing 2,6-diamino-4-hydroxy-5-(N-methyl)formamidopyrimidine.. The enzyme catalyses 2'-deoxyribonucleotide-(2'-deoxyribose 5'-phosphate)-2'-deoxyribonucleotide-DNA = a 3'-end 2'-deoxyribonucleotide-(2,3-dehydro-2,3-deoxyribose 5'-phosphate)-DNA + a 5'-end 5'-phospho-2'-deoxyribonucleoside-DNA + H(+). Involved in base excision repair of DNA damaged by oxidation or by mutagenic agents. Acts as a DNA glycosylase that recognizes and removes damaged bases. Has a preference for oxidized purines, such as 7,8-dihydro-8-oxoguanine (8-oxoG). Has AP (apurinic/apyrimidinic) lyase activity and introduces nicks in the DNA strand. Cleaves the DNA backbone by beta-delta elimination to generate a single-strand break at the site of the removed base with both 3'- and 5'-phosphates. The chain is Formamidopyrimidine-DNA glycosylase from Beijerinckia indica subsp. indica (strain ATCC 9039 / DSM 1715 / NCIMB 8712).